The following is a 631-amino-acid chain: RNA polymerase sigma factor RpoD (631 aa).

The interval 395–465 (LIKANLRLVV…TRSISDQART (71 aa)) is sigma-70 factor domain-2. The short motif at 419-422 (DLVQ) is the Interaction with polymerase core subunit RpoC element. The interval 474-550 (EQINRLNRET…DKAIKNPANH (77 aa)) is sigma-70 factor domain-3. The segment at 563–616 (ILGTLPEREQEVVKMRFGLEDGYSLTLEEVGLHFNVTRERIRQIESKALRRLKN) is sigma-70 factor domain-4. The H-T-H motif DNA-binding region spans 589 to 608 (LEEVGLHFNVTRERIRQIES).

The protein belongs to the sigma-70 factor family. RpoD/SigA subfamily. As to quaternary structure, interacts transiently with the RNA polymerase catalytic core.

It is found in the cytoplasm. Its function is as follows. Sigma factors are initiation factors that promote the attachment of RNA polymerase to specific initiation sites and are then released. This sigma factor is the primary sigma factor during exponential growth. The protein is RNA polymerase sigma factor RpoD of Borreliella burgdorferi (strain ATCC 35210 / DSM 4680 / CIP 102532 / B31) (Borrelia burgdorferi).